The sequence spans 343 residues: Multidrug resistance protein MdtN (343 aa).

Residues 1–12 (MESTPKKAPRSK) are Cytoplasmic-facing. A helical; Signal-anchor for type II membrane protein transmembrane segment spans residues 13–33 (FPALLVVALALVALVFVIWRV). Residues 34-343 (DSAPSTNDAY…ASAVANLEPQ (310 aa)) are Periplasmic-facing.

Belongs to the membrane fusion protein (MFP) (TC 8.A.1) family. Could be part of a tripartite efflux system composed of MdtN, MdtO and MdtP.

It localises to the cell inner membrane. Functionally, could be involved in resistance to puromycin, acriflavine and tetraphenylarsonium chloride. This is Multidrug resistance protein MdtN (mdtN) from Shigella flexneri.